The primary structure comprises 311 residues: Ribosomal RNA small subunit methyltransferase H (311 aa).

S-adenosyl-L-methionine contacts are provided by residues 41 to 43, Asp61, Phe85, Asp102, and Gln109; that span reads GGH.

Belongs to the methyltransferase superfamily. RsmH family.

The protein resides in the cytoplasm. It carries out the reaction cytidine(1402) in 16S rRNA + S-adenosyl-L-methionine = N(4)-methylcytidine(1402) in 16S rRNA + S-adenosyl-L-homocysteine + H(+). Its function is as follows. Specifically methylates the N4 position of cytidine in position 1402 (C1402) of 16S rRNA. In Paracidovorax citrulli (strain AAC00-1) (Acidovorax citrulli), this protein is Ribosomal RNA small subunit methyltransferase H.